The sequence spans 506 residues: MIDNVITAIDRVAAEHPTRVAYDYEGTQYTYAQLKEGSDRLAGFFAETLPEHEPIIVYGGQTFDMVEVFLGLSKSGHAYIPIDTHSPNERITQVQDVAHTPAIIEVAPLPIAVPDVQIIRAPALHEAEKTHAPISSLQHAVVGDDNYYIIFTSGTTGKPKGVQISHDNLLSYVNWNISDFGLKEGVVAMSQPPYSFDLSVMDLYPTLVLGGTLKALPKEVTDNFKTLFATLPKLGLNEWVSTPSFAEIALLDPNFNQDNYPDLTHFLFCGEELVNKTAQELITRFPKATVYNTYGPTETTVAVTGMAITQDIVDQYPRLPIGFAKPDTEIFVVDEQGNQVSAGTEGELMIVGPSVSKGYLNNPEKTAKAFFNVGSQRGYRSGDLATMTEDGMIFYRGRTDFQVKLHGYRIELEDVDHNLNQVSYIKQASTVPRYNKDHKVAQLIAFAVAKPNDFESDMKLTQAVKAELGKMVMEYMIPQRIIYRDKLPLTANGKVDRKALIAEVNH.

152 to 153 (TS) is an ATP binding site. Asp-197 lines the D-alanine pocket. ATP is bound at residue 292 to 297 (NTYGPT). Val-301 is a D-alanine binding site. ATP-binding positions include Asp-383, 395-398 (YRGR), and Lys-494. A D-alanine-binding site is contributed by Lys-494.

The protein belongs to the ATP-dependent AMP-binding enzyme family. DltA subfamily.

Its subcellular location is the cytoplasm. The catalysed reaction is holo-[D-alanyl-carrier protein] + D-alanine + ATP = D-alanyl-[D-alanyl-carrier protein] + AMP + diphosphate. The protein operates within cell wall biogenesis; lipoteichoic acid biosynthesis. In terms of biological role, catalyzes the first step in the D-alanylation of lipoteichoic acid (LTA), the activation of D-alanine and its transfer onto the D-alanyl carrier protein (Dcp) DltC. In an ATP-dependent two-step reaction, forms a high energy D-alanyl-AMP intermediate, followed by transfer of the D-alanyl residue as a thiol ester to the phosphopantheinyl prosthetic group of the Dcp. D-alanylation of LTA plays an important role in modulating the properties of the cell wall in Gram-positive bacteria, influencing the net charge of the cell wall. This Lacticaseibacillus paracasei (strain ATCC 334 / BCRC 17002 / CCUG 31169 / CIP 107868 / KCTC 3260 / NRRL B-441) (Lactobacillus paracasei) protein is D-alanine--D-alanyl carrier protein ligase.